We begin with the raw amino-acid sequence, 133 residues long: Hexon-interlacing protein (133 aa).

The stretch at 97–127 (REEDALSVVLTRMEELSQQLQDLFAKVALLN) forms a coiled coil.

The protein belongs to the adenoviridae hexon-interlacing protein family. As to quaternary structure, homotrimer. Interacts with hexon protein; this interaction tethers the hexons together. Self-interacts with adjacent proteins. Interacts with kinesin light chain KLC1; this interaction leads to capsid disruption at the nuclear pore complex during virus entry into host cell.

It localises to the virion. The protein localises to the host nucleus. Functionally, structural component of the virion that acts as a cement protein on the capsid exterior and forms triskelion structures consisting of three molecules that stabilize three hexon trimers at the center of each icosahedral facet and fixes the peripentonal hexons. Dispensable for assembly. During virus entry, recruits the anterograde motor kinesin-1 to the capsid docked at the nuclear pore complex thereby subjecting the docked capsid to a pulling force. The resulting tension leads to capsid disruption, dispersion of capsid fragments toward cell periphery and eventually viral DNA entry into the host nucleus. The sequence is that of Hexon-interlacing protein from Homo sapiens (Human).